A 413-amino-acid chain; its full sequence is Palmitoyl-acyl carrier protein thioesterase, chloroplastic (413 aa).

Residues 1 to 57 constitute a chloroplast transit peptide; the sequence is MVATAVTSAFFPVTSSPDSSDSKNKKLGSIKSKPSVSSGSLQVKANAQAPPKINGTV. The disordered stretch occupies residues 12–79; it reads PVTSSPDSSD…DGASSPPPRT (68 aa). Residues 29–40 are compositionally biased toward low complexity; sequence SIKSKPSVSSGS. Catalysis depends on residues N310, H312, and C347. The interval 394–413 is disordered; sequence WRPKHAKSSANMDQITAKRA.

Belongs to the acyl-ACP thioesterase family.

The protein localises to the plastid. It is found in the chloroplast. The enzyme catalyses hexadecanoyl-[ACP] + H2O = hexadecanoate + holo-[ACP] + H(+). In terms of biological role, plays an essential role in chain termination during de novo fatty acid synthesis. High thioesterase activity for palmitoyl-ACP versus other acyl-ACPs. This is Palmitoyl-acyl carrier protein thioesterase, chloroplastic (FATB1) from Gossypium hirsutum (Upland cotton).